The chain runs to 60 residues: Large ribosomal subunit protein bL32 (60 aa).

Belongs to the bacterial ribosomal protein bL32 family.

The sequence is that of Large ribosomal subunit protein bL32 from Latilactobacillus sakei subsp. sakei (strain 23K) (Lactobacillus sakei subsp. sakei).